Consider the following 238-residue polypeptide: Trypsin-3 (238 aa).

The first 7 residues, 1 to 7, serve as a signal peptide directing secretion; it reads FAVAFAA. Positions 8-15 are cleaved as a propeptide — activation peptide; it reads PIDDEDDK. In terms of domain architecture, Peptidase S1 spans 16 to 236; that stretch reads IVGGYECRKN…YRSWISSTMS (221 aa). 6 disulfide bridges follow: cysteine 22–cysteine 152, cysteine 40–cysteine 56, cysteine 124–cysteine 225, cysteine 131–cysteine 198, cysteine 163–cysteine 177, and cysteine 188–cysteine 212. Catalysis depends on histidine 55, which acts as the Charge relay system. Residues glutamate 67, asparagine 69, valine 72, and glutamate 77 each coordinate Ca(2+). Aspartate 99 (charge relay system) is an active-site residue. Serine 192 (charge relay system) is an active-site residue.

It belongs to the peptidase S1 family. The cofactor is Ca(2+).

The protein localises to the secreted. Its subcellular location is the extracellular space. The enzyme catalyses Preferential cleavage: Arg-|-Xaa, Lys-|-Xaa.. This Salmo salar (Atlantic salmon) protein is Trypsin-3.